The primary structure comprises 178 residues: Large ribosomal subunit protein uL6 (178 aa).

This sequence belongs to the universal ribosomal protein uL6 family. In terms of assembly, part of the 50S ribosomal subunit.

Functionally, this protein binds to the 23S rRNA, and is important in its secondary structure. It is located near the subunit interface in the base of the L7/L12 stalk, and near the tRNA binding site of the peptidyltransferase center. This chain is Large ribosomal subunit protein uL6, found in Thermoplasma acidophilum (strain ATCC 25905 / DSM 1728 / JCM 9062 / NBRC 15155 / AMRC-C165).